The following is a 338-amino-acid chain: Ketol-acid reductoisomerase (NADP(+)) (338 aa).

The KARI N-terminal Rossmann domain maps to 1 to 181 (MKVYYDKDCN…GGGRSGIIET (181 aa)). NADP(+) contacts are provided by residues 24–27 (YGSQ), Arg-47, Ser-50, Ser-52, and 82–85 (DETQ). His-107 is an active-site residue. NADP(+) is bound at residue Gly-133. Residues 182–327 (NFREETETDL…ARLRAMMPWI (146 aa)) enclose the KARI C-terminal knotted domain. Residues Asp-190, Glu-194, Glu-226, and Glu-230 each coordinate Mg(2+). Residue Ser-251 coordinates substrate.

It belongs to the ketol-acid reductoisomerase family. It depends on Mg(2+) as a cofactor.

The catalysed reaction is (2R)-2,3-dihydroxy-3-methylbutanoate + NADP(+) = (2S)-2-acetolactate + NADPH + H(+). The enzyme catalyses (2R,3R)-2,3-dihydroxy-3-methylpentanoate + NADP(+) = (S)-2-ethyl-2-hydroxy-3-oxobutanoate + NADPH + H(+). It participates in amino-acid biosynthesis; L-isoleucine biosynthesis; L-isoleucine from 2-oxobutanoate: step 2/4. Its pathway is amino-acid biosynthesis; L-valine biosynthesis; L-valine from pyruvate: step 2/4. Involved in the biosynthesis of branched-chain amino acids (BCAA). Catalyzes an alkyl-migration followed by a ketol-acid reduction of (S)-2-acetolactate (S2AL) to yield (R)-2,3-dihydroxy-isovalerate. In the isomerase reaction, S2AL is rearranged via a Mg-dependent methyl migration to produce 3-hydroxy-3-methyl-2-ketobutyrate (HMKB). In the reductase reaction, this 2-ketoacid undergoes a metal-dependent reduction by NADPH to yield (R)-2,3-dihydroxy-isovalerate. The chain is Ketol-acid reductoisomerase (NADP(+)) from Pelobacter propionicus (strain DSM 2379 / NBRC 103807 / OttBd1).